The primary structure comprises 761 residues: Cytoplasmic export protein 1 (761 aa).

2 HEAT repeats span residues 385–423 (IYPH…LNNE) and 498–534 (NTIA…LEKL). 2 disordered regions span residues 660–692 (DDGW…IAPS) and 714–761 (STVT…DTNW). Polar residues-rich tracts occupy residues 680–692 (PQNS…IAPS) and 714–737 (STVT…SIRG). The span at 747 to 761 (GWDDDGDSDSWDTNW) shows a compositional bias: acidic residues. S754 is subject to Phosphoserine.

In terms of assembly, associates with the nuclear pore complex (NPC). Interacts with GSP1, LOS1, MSN5, NUP116 and TEF2.

It localises to the cytoplasm. In terms of biological role, component of the nuclear tRNA export machinery that my collect tRNA from the nuclear tRNA export receptors of the aminoacylation-dependent export and may deliver aminoacylated tRNAs to the translation machinery pathway at the nuclear pore complex. The chain is Cytoplasmic export protein 1 (CEX1) from Saccharomyces cerevisiae (strain ATCC 204508 / S288c) (Baker's yeast).